The following is a 484-amino-acid chain: CUGBP Elav-like family member 2 (484 aa).

2 necessary for nuclear export regions span residues 1-89 (MNGA…PGMH) and 90-178 (HPIQ…EGCS). 3 consecutive RRM domains span residues 16-99 (IKTF…PADS), 108-188 (RKLF…FADT), and 399-477 (ANLF…LKRS). The tract at residues 188-240 (TQKDKEQRRLQQQLAQQMQQLNTATWGNLTGLGGLTPQYLALLQQATSSSNLG) is necessary for splicing activity. The necessary for nuclear localization stretch occupies residues 347–399 (GLTNGTAGTMDALTQAYSGIQQYAAAALPTLYSQSLLQQQSAAGSQKEGPEGA). The tract at residues 426 to 484 (ISAKVFIDKQTNLSKCFGFVSYDNPVSAQAAIQAMNGFQIGMKRLKVQLKRSKNDSKPY) is necessary for nuclear localization and splicing activity.

This sequence belongs to the CELF/BRUNOL family. As to expression, expressed in heart.

Its subcellular location is the nucleus. It is found in the cytoplasm. Its function is as follows. RNA-binding protein implicated in the regulation of several post-transcriptional events. May be involved in mRNA translation repression and stability. Mediates exon inclusion in TNNT2 pre-mRNA. The chain is CUGBP Elav-like family member 2 (CELF2) from Gallus gallus (Chicken).